The primary structure comprises 319 residues: Vomeronasal type-1 receptor 51 (319 aa).

Topologically, residues 1 to 31 (MNEILFFSPQPLFSHMMNENSRVHTHSNLRH) are extracellular. Residues 32 to 52 (IFFSEIGIGISGNSFLLLFHI) form a helical membrane-spanning segment. Residues 53–65 (LKFIHGHRSRLSD) are Cytoplasmic-facing. A helical transmembrane segment spans residues 66–86 (LPIGLLSLIHLLMLLVMAFIA). The Extracellular portion of the chain corresponds to 87 to 109 (TDIFISWRGWDDIICKFLVYLYR). An intrachain disulfide couples Cys-101 to Cys-188. Residues 110–130 (VLRGLSLCTTSMLSVLQAIIL) traverse the membrane as a helical segment. Over 131–150 (SPRSSCLAKFKRKSLHHISC) the chain is Cytoplasmic. Residues 151–171 (AILFLSVLYMLIGSQLLVSII) traverse the membrane as a helical segment. The Extracellular portion of the chain corresponds to 172-203 (ATPNLTTNDFIYVTQSCSILPLSYVMQSMFST). Residue Asn-175 is glycosylated (N-linked (GlcNAc...) asparagine). The helical transmembrane segment at 204 to 224 (LLVIRDVFLISLMVLSTWYMV) threads the bilayer. Residues 225 to 254 (ALLCRHRKKTQHLQGISLSPKTSPKQRATQ) lie on the Cytoplasmic side of the membrane. A helical transmembrane segment spans residues 255–275 (TLLMLMSFFVLMTIYDTIVSC). At 276 to 285 (SRTMFLNDPT) the chain is on the extracellular side. The chain crosses the membrane as a helical span at residues 286-306 (SYNMQIFVVHIYATVSPFVFM). Over 307 to 319 (STEKHIVNCLRSV) the chain is Cytoplasmic.

This sequence belongs to the G-protein coupled receptor 1 family. Expressed in a subset of sensory neurons located in the apical layer of the vomeronasal organ.

It is found in the cell membrane. In terms of biological role, putative pheromone receptor implicated in the regulation of social as well as reproductive behavior. This chain is Vomeronasal type-1 receptor 51 (Vmn1r51), found in Mus musculus (Mouse).